Consider the following 324-residue polypeptide: Acetyl-coenzyme A carboxylase carboxyl transferase subunit alpha (324 aa).

One can recognise a CoA carboxyltransferase C-terminal domain in the interval 41-291; that stretch reads RLDRLKEKIY…QEYVLQEWLK (251 aa).

The protein belongs to the AccA family. In terms of assembly, acetyl-CoA carboxylase is a heterohexamer composed of biotin carboxyl carrier protein (AccB), biotin carboxylase (AccC) and two subunits each of ACCase subunit alpha (AccA) and ACCase subunit beta (AccD).

It localises to the cytoplasm. The catalysed reaction is N(6)-carboxybiotinyl-L-lysyl-[protein] + acetyl-CoA = N(6)-biotinyl-L-lysyl-[protein] + malonyl-CoA. It participates in lipid metabolism; malonyl-CoA biosynthesis; malonyl-CoA from acetyl-CoA: step 1/1. Functionally, component of the acetyl coenzyme A carboxylase (ACC) complex. First, biotin carboxylase catalyzes the carboxylation of biotin on its carrier protein (BCCP) and then the CO(2) group is transferred by the carboxyltransferase to acetyl-CoA to form malonyl-CoA. The chain is Acetyl-coenzyme A carboxylase carboxyl transferase subunit alpha from Chlamydia muridarum (strain MoPn / Nigg).